A 347-amino-acid polypeptide reads, in one-letter code: MAWENQTFNSDFILLGIFNHSPPHTFLFFLVLGIFLVAFMGNSVMVLLIYLDTQLHTPMYFLLSQLSLMDLMLICTTVPKMAFNYLSGSKSISMAGCVTQIFFYISLSGSECFLLAVMAYDRYIAICHPLRYTNLMNPKICGLMATFSWILGSTDGIIDAVATFSFSFCGSREIAHFFCEFPSLLILSCNDTSIFEEVIFICCIVMLVFPVAIIIASYARVILAVIHMGSGEGRCKAFTTCSSHLMVVGMYYGAALFMYIRPTSDHSPTQDKMVSVFYTILTPMLNPLIYSLRNKEVTRAFMKILGKGKSESELPHKLYVLLFAKFFFLISIFFYDVKILALIMYIA.

Over 1–25 the chain is Extracellular; it reads MAWENQTFNSDFILLGIFNHSPPHT. N5 is a glycosylation site (N-linked (GlcNAc...) asparagine). The chain crosses the membrane as a helical span at residues 26–49; sequence FLFFLVLGIFLVAFMGNSVMVLLI. Topologically, residues 50–57 are cytoplasmic; that stretch reads YLDTQLHT. The chain crosses the membrane as a helical span at residues 58–79; sequence PMYFLLSQLSLMDLMLICTTVP. Over 80-100 the chain is Extracellular; that stretch reads KMAFNYLSGSKSISMAGCVTQ. Residues C97 and C189 are joined by a disulfide bond. Residues 101–120 form a helical membrane-spanning segment; that stretch reads IFFYISLSGSECFLLAVMAY. The Cytoplasmic segment spans residues 121 to 139; that stretch reads DRYIAICHPLRYTNLMNPK. Residues 140–158 form a helical membrane-spanning segment; that stretch reads ICGLMATFSWILGSTDGII. Residues 159–195 are Extracellular-facing; sequence DAVATFSFSFCGSREIAHFFCEFPSLLILSCNDTSIF. Residue N190 is glycosylated (N-linked (GlcNAc...) asparagine). Residues 196-219 traverse the membrane as a helical segment; the sequence is EEVIFICCIVMLVFPVAIIIASYA. The Cytoplasmic segment spans residues 220-236; the sequence is RVILAVIHMGSGEGRCK. The helical transmembrane segment at 237–259 threads the bilayer; it reads AFTTCSSHLMVVGMYYGAALFMY. The Extracellular portion of the chain corresponds to 260-272; sequence IRPTSDHSPTQDK. The chain crosses the membrane as a helical span at residues 273–292; that stretch reads MVSVFYTILTPMLNPLIYSL. The Cytoplasmic segment spans residues 293–347; it reads RNKEVTRAFMKILGKGKSESELPHKLYVLLFAKFFFLISIFFYDVKILALIMYIA.

It belongs to the G-protein coupled receptor 1 family.

The protein resides in the cell membrane. In terms of biological role, odorant receptor. This Homo sapiens (Human) protein is Olfactory receptor 2M2 (OR2M2).